The sequence spans 139 residues: Flagellar basal body rod protein FlgB (139 aa).

Belongs to the flagella basal body rod proteins family. As to quaternary structure, the basal body constitutes a major portion of the flagellar organelle and consists of a number of rings mounted on a central rod. In Gram-negative bacteria, at least four rings, L, P, S and M are present, whereas Gram-positive bacteria lack the L and P rings. The rod consists of about 26 subunits of FlgG in the distal portion, and FlgB, FlgC and FlgF build up the proximal portion of the rod with about 6 subunits each. Rod assembly occurs by export via the flagellum-specific pathway of its constituent proteins and by their incorporation into the rod structure in the probable order of FlgB, FlgC, FlgF and FlgG. Another protein, FliE, also assembles onto the stable rod structure.

The protein resides in the bacterial flagellum basal body. Functionally, structural component of flagellum, the bacterial motility apparatus. Part of the rod structure of flagellar basal body. The sequence is that of Flagellar basal body rod protein FlgB from Proteus mirabilis.